Here is a 406-residue protein sequence, read N- to C-terminus: Ribulose bisphosphate carboxylase large chain (406 aa).

Residues N101 and T151 each contribute to the substrate site. Residue K153 is the Proton acceptor of the active site. Residue K155 participates in substrate binding. K179, D181, and E182 together coordinate Mg(2+). K179 is subject to N6-carboxylysine. H272 functions as the Proton acceptor in the catalytic mechanism. 3 residues coordinate substrate: R273, H305, and S357.

It belongs to the RuBisCO large chain family. Type I subfamily. In terms of assembly, heterohexadecamer of 8 large chains and 8 small chains; disulfide-linked. The disulfide link is formed within the large subunit homodimers. It depends on Mg(2+) as a cofactor. The disulfide bond which can form in the large chain dimeric partners within the hexadecamer appears to be associated with oxidative stress and protein turnover.

Its subcellular location is the plastid. The protein resides in the chloroplast. The catalysed reaction is 2 (2R)-3-phosphoglycerate + 2 H(+) = D-ribulose 1,5-bisphosphate + CO2 + H2O. The enzyme catalyses D-ribulose 1,5-bisphosphate + O2 = 2-phosphoglycolate + (2R)-3-phosphoglycerate + 2 H(+). Its function is as follows. RuBisCO catalyzes two reactions: the carboxylation of D-ribulose 1,5-bisphosphate, the primary event in carbon dioxide fixation, as well as the oxidative fragmentation of the pentose substrate in the photorespiration process. Both reactions occur simultaneously and in competition at the same active site. This chain is Ribulose bisphosphate carboxylase large chain (rbcL), found in Trichomanes striatum (Fern).